The following is an 82-amino-acid chain: Delta-conotoxin SVIE (82 aa).

Positions 1–22 (MKLTCVMIVAVLFLTTWTFVTA) are cleaved as a signal peptide. A propeptide spanning residues 23 to 51 (DDSRYGLKNLFPKARHEMKNPEASKLNKR) is cleaved from the precursor. Disulfide bonds link Cys-54/Cys-69, Cys-61/Cys-73, and Cys-68/Cys-77. At Pro-65 the chain carries 4-hydroxyproline.

This sequence belongs to the conotoxin O1 superfamily. As to expression, expressed by the venom duct.

It is found in the secreted. Delta-conotoxins bind to site 6 of voltage-gated sodium channels (Nav) and inhibit the inactivation process. Impairs rapid channel inactivation of Nav1.4/SCN4A (Kd=500 nM). Interacts with a conserved hydrophobic triad (YFV) in the domain-4 voltage sensor of sodium channels. In vivo, injection of both native or synthetic peptide induces twitching of back limbs, running in circles, and spastic paralysis. The protein is Delta-conotoxin SVIE (SO6) of Conus striatus (Striated cone).